Consider the following 342-residue polypeptide: MFNIKPLSSEFEEAIQQKIDTKTKPLGALGDLEGLALQIAKVLGKDNPQINNPKMMVFAADHGIASSGVSIAPSEVTAQMVRNFMAGGAAINVFTRQVGLELEVIDCGVLQPFDSDSGVIDQRLGAGTGPIHKRAAMTLGAVKQGFEMAADRIQLHHQNGCNLIALGEMGIGNTSSAAAIMSVLTGVAASDCVGRGTGIDAATFKRKQMLIEQAVLLHHSELDDPMQVLACIGGFEIVQMTGAILAAAERGMLVVIDGFIASAAALVAVNINSHCRDYMIFSHQSDEKGHYLMLEYMQAKPLLNLGLKLGEGTGAALAFPLIQAAVNFYNQMASFEDAGIEI.

The active-site Proton acceptor is E311.

This sequence belongs to the CobT family.

The enzyme catalyses 5,6-dimethylbenzimidazole + nicotinate beta-D-ribonucleotide = alpha-ribazole 5'-phosphate + nicotinate + H(+). It functions in the pathway nucleoside biosynthesis; alpha-ribazole biosynthesis; alpha-ribazole from 5,6-dimethylbenzimidazole: step 1/2. Functionally, catalyzes the synthesis of alpha-ribazole-5'-phosphate from nicotinate mononucleotide (NAMN) and 5,6-dimethylbenzimidazole (DMB). This is Nicotinate-nucleotide--dimethylbenzimidazole phosphoribosyltransferase from Shewanella piezotolerans (strain WP3 / JCM 13877).